Consider the following 312-residue polypeptide: Olfactory receptor 51B2 (312 aa).

The Extracellular portion of the chain corresponds to 1–23 (MWPNITAAPFLLTGFPGLEAAHH). A glycan (N-linked (GlcNAc...) asparagine) is linked at Asn4. The helical transmembrane segment at 24 to 44 (WISIPFFAVYVCILLGNGMLL) threads the bilayer. Residues 45 to 52 (YLIKHDHS) are Cytoplasmic-facing. A helical membrane pass occupies residues 53–73 (LHEPMYYFLTMLAGTDLMVTL). The Extracellular portion of the chain corresponds to 74–97 (TTMPTVMGILWVNHREISSVGCFL). A disulfide bridge links Cys95 with Cys187. A helical transmembrane segment spans residues 98–118 (QAYFIHSLSVVESGSLLAMAY). Residues 119–137 (DCFIAIRNPLRYASILTNT) are Cytoplasmic-facing. A helical transmembrane segment spans residues 138–158 (RVIALGVGVFLRGFVSILPVI). Residues 159–194 (LRLFSFSYCKSHVITRAFCLHQEIMRLACADITFNR) lie on the Extracellular side of the membrane. The helical transmembrane segment at 195–215 (LYPVILISLTIFLDCLIILFS) threads the bilayer. The Cytoplasmic portion of the chain corresponds to 216 to 235 (YILILNTVIGIASGEERAKA). Residues 236 to 256 (LNTCISHISCVLIFYVTVMGL) form a helical membrane-spanning segment. Topologically, residues 257–271 (TFIYRFGKNVPEVVH) are extracellular. The chain crosses the membrane as a helical span at residues 272–292 (IIMSYIYFLFPPLMNPVIYSI). At 293-312 (KTKQIQYGIIRLLSKHRFSS) the chain is on the cytoplasmic side.

This sequence belongs to the G-protein coupled receptor 1 family. Ubiquitinated by the CRL2(FEM1A) and CRL2(FEM1C) complexes, which recognize the -Lys-Xaa-Xaa-Arg C-degron at the C-terminus, leading to its degradation.

Its subcellular location is the cell membrane. In terms of biological role, odorant receptor. This is Olfactory receptor 51B2 (OR51B2) from Homo sapiens (Human).